The sequence spans 323 residues: Prenyl transferase (323 aa).

Isopentenyl diphosphate contacts are provided by Lys46, Arg49, and His81. Residues Asp88 and Asp92 each contribute to the Mg(2+) site. Arg97 serves as a coordination point for an all-trans-polyprenyl diphosphate. Position 98 (Arg98) interacts with isopentenyl diphosphate. Lys174, Thr175, and Gln212 together coordinate an all-trans-polyprenyl diphosphate.

This sequence belongs to the FPP/GGPP synthase family. It depends on Mg(2+) as a cofactor.

The protein localises to the plastid. The protein resides in the cyanelle. In terms of biological role, possible role in synthesis of the nonaprenyl side chain of plastoquinone or in synthesis of other prenyl chains such as undekaprenyl pyrophosphate. The protein is Prenyl transferase (preA) of Cyanophora paradoxa.